A 584-amino-acid chain; its full sequence is 4-hydroxybenzoate decarboxylase subunit C (584 aa).

The protein belongs to the UbiD family. Component of the decarboxylase complex composed of the subunits B and C (Potential). The subunit D usually found in other organisms seems to be absent.

The catalysed reaction is 4-hydroxybenzoate + H(+) = phenol + CO2. With respect to regulation, the enzyme activity is enhanced by Mg(2+), Fe(2+), Mn(2+) and Ca(2+). No stimulation is observed with Cu(2+) and Zn(2+). Catalyzes the reversible decarboxylation of 4-hydroxybenzoate. The sequence is that of 4-hydroxybenzoate decarboxylase subunit C from Chlamydia pneumoniae (Chlamydophila pneumoniae).